Here is a 2000-residue protein sequence, read N- to C-terminus: Sodium channel protein type 3 subunit alpha (2000 aa).

The Cytoplasmic segment spans residues 1–128 (MAQALLVPPG…KIAIKILVHS (128 aa)). The disordered stretch occupies residues 28 to 60 (RAAEEKAKKPKKEQDNDDENKPKPNSDLEAGKN). The span at 46-57 (ENKPKPNSDLEA) shows a compositional bias: basic and acidic residues. The stretch at 110–455 (ILTPLNPVRK…QQMLEQLKKQ (346 aa)) is one I repeat. A helical membrane pass occupies residues 129–146 (LFSMLIMCTILTNCVFMT). The Extracellular portion of the chain corresponds to 147–152 (LSNPPD). A helical transmembrane segment spans residues 153-174 (WTKNVEYTFTGIYTFESLIKIL). At 175 to 188 (ARGFCLEDFTFLRD) the chain is on the cytoplasmic side. A helical membrane pass occupies residues 189-206 (PWNWLDFSVIVMAYVTEF). Topologically, residues 207-213 (VSLGNVS) are extracellular. Residue asparagine 211 is glycosylated (N-linked (GlcNAc...) asparagine). Residues 214-235 (ALRTFRVLRALKTISVIPGLKT) traverse the membrane as a helical segment. Residues 236–249 (IVGALIQSVKKLSD) are Cytoplasmic-facing. Residues 250-269 (VMILTVFCLSVFALIGLQLF) form a helical membrane-spanning segment. Topologically, residues 270 to 369 (MGNLRNKCLQ…NYGYTSFDTF (100 aa)) are extracellular. Asparagine 290, asparagine 296, asparagine 302, asparagine 307, and asparagine 339 each carry an N-linked (GlcNAc...) asparagine glycan. Residues 370 to 386 (SWAFLSLFRLMTQDYWE) constitute an intramembrane region (pore-forming). Topologically, residues 387–397 (NLYQLTLRAAG) are extracellular. The chain crosses the membrane as a helical span at residues 398–424 (KTYMIFFVLVIFLGSFYLVNLILAVVA). Topologically, residues 425–761 (MAYEEQNQAT…LVNLIVMDPF (337 aa)) are cytoplasmic. A phosphoserine mark is found at serine 484, serine 485, and serine 486. Disordered stretches follow at residues 493–528 (SKSA…KSES), 587–631 (VGSE…ASMS), and 662–681 (ALTS…ETEV). The span at 500–509 (RNRRKKRRQR) shows a compositional bias: basic residues. 2 stretches are compositionally biased toward basic and acidic residues: residues 510 to 528 (EHLE…KSES) and 596 to 610 (DEHS…RRDS). Polar residues predominate over residues 662–678 (ALTSPTGQLPPEGTTTE). Residues 742-1014 (CCDAWLKVKH…QIAVGRMQKG (273 aa)) form an II repeat. The helical transmembrane segment at 762–779 (VDLAITICIVLNTLFMAM) threads the bilayer. Topologically, residues 780–787 (EHYPMTEQ) are extracellular. The helical transmembrane segment at 788–812 (FSSVLTVGNLVFTGIFTAEMVLKII) threads the bilayer. Residues 813 to 822 (AMDPYYYFQE) lie on the Cytoplasmic side of the membrane. The helical transmembrane segment at 823-842 (GWNIFDGIIVSLSLMELGLS) threads the bilayer. At 843–846 (NVEG) the chain is on the extracellular side. The chain crosses the membrane as a helical span at residues 847–865 (LSVLRSFRLLRVFKLAKSW). Residues 866–883 (PTLNMLIKIIGNSVGALG) are Cytoplasmic-facing. A helical membrane pass occupies residues 884–904 (NLTLVLAIIVFIFAVVGMQLF). The Extracellular portion of the chain corresponds to 905 to 929 (GKSYKECVCKINDDCTLPRWHMNDF). Cysteine 913 and cysteine 919 are oxidised to a cystine. Residues 930-945 (FHSFLIVFRVLCGEWI) constitute an intramembrane region (pore-forming). Residues 946–956 (ETMWDCMEVAG) are Extracellular-facing. Cysteine 951 and cysteine 960 form a disulfide bridge. The chain crosses the membrane as a helical span at residues 957–983 (QTMCLIVFMLVMVIGNLVVLNLFLALL). Over 984–1205 (LSSFSSDNLA…RKTCYSIVEH (222 aa)) the chain is Cytoplasmic. Residues 1118-1162 (EEFSSESELEESKEKLNATSSSEGSTVDVVLPREGEQAETEPEED) are disordered. The stretch at 1188–1499 (KGKIWWNLRK…KKYYNAMKKL (312 aa)) is one III repeat. Residues 1206 to 1226 (NWFETFIVFMILLSSGALAFE) form a helical membrane-spanning segment. Over 1227-1238 (DIYIEQRKTIKT) the chain is Extracellular. The chain crosses the membrane as a helical span at residues 1239–1260 (MLEYADKVFTYIFILEMLLKWV). The Cytoplasmic segment spans residues 1261–1266 (AYGFQT). Residues 1267 to 1292 (YFTNAWCWLDFLIVDVSLVSLVANAL) form a helical membrane-spanning segment. The Extracellular portion of the chain corresponds to 1293 to 1301 (GYSELGAIK). The chain crosses the membrane as a helical span at residues 1302-1320 (SLRTLRALRPLRALSRFEG). Topologically, residues 1321-1333 (MRVVVNALVGAIP) are cytoplasmic. A helical transmembrane segment spans residues 1334–1356 (SIMNVLLVCLIFWLIFSIMGVNL). At 1357-1402 (FAGKFYHCVNMTTGNMFDISDVNNLSDCQALGKQARWKNVKVNFDN) the chain is on the extracellular side. A disulfide bridge connects residues cysteine 1364 and cysteine 1384. Asparagine 1366 and asparagine 1380 each carry an N-linked (GlcNAc...) asparagine glycan. An intramembrane region (pore-forming) is located at residues 1403-1419 (VGAGYLALLQVATFKGW). The Extracellular portion of the chain corresponds to 1420-1442 (MDIMYAAVDSRDVKLQPVYEENL). The chain crosses the membrane as a helical span at residues 1443-1468 (YMYLYFVIFIIFGSFFTLNLFIGVII). The Cytoplasmic portion of the chain corresponds to 1469 to 1526 (DNFNQQKKKFGGQDIFMTEEQKKYYNAMKKLGSKKPQKPIPRPANKFQGMVFDFVTRQ). A Phosphoserine; by PKC modification is found at serine 1501. An IV repeat occupies 1508–1806 (IPRPANKFQG…WEKFDPDATQ (299 aa)). The helical transmembrane segment at 1527-1545 (VFDISIMILICLNMVTMMV) threads the bilayer. At 1546 to 1553 (ETDDQGKY) the chain is on the extracellular side. Residues 1554–1577 (MTLVLSRINLVFIVLFTGEFVLKL) traverse the membrane as a helical segment. Over 1578–1587 (VSLRHYYFTI) the chain is Cytoplasmic. Residues 1588–1605 (GWNIFDFVVVILSIVGMF) traverse the membrane as a helical segment. Topologically, residues 1606 to 1617 (LAEMIEKYFVSP) are extracellular. A helical transmembrane segment spans residues 1618 to 1640 (TLFRVIRLARIGRILRLIKGAKG). Residues 1641 to 1653 (IRTLLFALMMSLP) lie on the Cytoplasmic side of the membrane. The helical transmembrane segment at 1654 to 1677 (ALFNIGLLLFLVMFIYAIFGMSNF) threads the bilayer. Topologically, residues 1678 to 1699 (AYVKKEAGIDDMFNFETFGNSM) are extracellular. An intramembrane region (pore-forming) is located at residues 1700 to 1712 (ICLFQITTSAGWD). The Extracellular segment spans residues 1713–1744 (GLLAPILNSAPPDCDPDTIHPGSSVKGDCGNP). Residues 1745 to 1770 (SVGIFFFVSYIIISFLVVVNMYIAVI) traverse the membrane as a helical segment. At 1771–2000 (LENFSVATEE…KGKEVRENQK (230 aa)) the chain is on the cytoplasmic side. In terms of domain architecture, IQ spans 1900–1929 (EEVSAAIIQRNFRCYLLKQRLKNISSNYNK). The disordered stretch occupies residues 1949-2000 (LNGNSTPEKTDGSSSTTSPPSYDSVTKPDKEKFEKDKPEKESKGKEVRENQK). Residues 1974 to 2000 (TKPDKEKFEKDKPEKESKGKEVRENQK) are compositionally biased toward basic and acidic residues.

The protein belongs to the sodium channel (TC 1.A.1.10) family. Nav1.3/SCN3A subfamily. As to quaternary structure, heterooligomer of an alpha subunit, SCN3A, and 1 to 3 regulatory beta subunits including SCN1B and SCN2B; disulfide-linked with some beta subunits like SCN2B. Interacts with NEDD4L; could regulate expression of SCN3A at the plasma membrane through ubiquitination-regulated endocytosis. Interacts with the conotoxin GVIIJ. Post-translationally, may be ubiquitinated by NEDD4L; which would promote its endocytosis. Phosphorylation at Ser-1501 by PKC in a highly conserved cytoplasmic loop slows inactivation of the sodium channel and reduces peak sodium currents. Expressed in enterochromaffin cells in both colon and small bowel (at protein level).

The protein localises to the cell membrane. The protein resides in the basal cell membrane. The enzyme catalyses Na(+)(in) = Na(+)(out). Functionally, pore-forming subunit of Nav1.3, a voltage-gated sodium (Nav) channel that directly mediates the depolarizing phase of action potentials in excitable membranes. Navs, also called VGSCs (voltage-gated sodium channels) or VDSCs (voltage-dependent sodium channels), operate by switching between closed and open conformations depending on the voltage difference across the membrane. In the open conformation they allow Na(+) ions to selectively pass through the pore, along their electrochemical gradient. The influx of Na+ ions provokes membrane depolarization, initiating the propagation of electrical signals throughout cells and tissues. In some secretory cell types, it also participates in cell excitability through membrane depolarization and regulates cells responsiveness to stimuli triggering secretion. For instance, it controls the release of serotonin/5-hydroxytryptamine by enterochromaffin cells and is required for both glucagon- and glucose-induced insulin secretion in pancreatic endocrine cells. In Homo sapiens (Human), this protein is Sodium channel protein type 3 subunit alpha.